Reading from the N-terminus, the 507-residue chain is FAD-linked oxidoreductase OXR1 (507 aa).

The signal sequence occupies residues 1–21 (MTIKFASLILAGLGLGSGALG). N34 and N65 each carry an N-linked (GlcNAc...) asparagine glycan. Residues 73–245 (YAPPTFKVSV…VSATYKLKPL (173 aa)) form the FAD-binding PCMH-type domain. N-linked (GlcNAc...) asparagine glycosylation is found at N263 and N288.

This sequence belongs to the oxygen-dependent FAD-linked oxidoreductase family. Requires FAD as cofactor.

The enzyme catalyses dihydropyriculol + A = pyriculol + AH2. The catalysed reaction is dihydropyriculariol + A = pyriculariol + AH2. The protein operates within polyketide biosynthesis. Its function is as follows. FAD-linked oxidoreductase; part of the gene cluster that mediates the biosynthesis of pyriculol and pyriculariol, two heptaketides that induce lesion formation upon application on rice leaves but are dispensable for pathogenicity. The highly reducing polyketide synthase synthesizes the heptaketide backbone of pyriculol and pyriculariol. Pyriculol and pyriculariol contain several hydroxyl moieties and double bonds, so it can be assumed that several reduction steps occur during biosynthesis. These reactions could be executed by PKS19 itself or partly by the tailoring enzymes OXR1, OXR2, RED1, RED2 or RED3, identified within the cluster. The FAD-linked oxidoreductase OXR1 is the only tailoring enzyme for which the function has been determined yet, and is involved in the oxidation of dihydropyriculol and dihydropyriculariol into pyriculol and pyriculariol, respectively. This chain is FAD-linked oxidoreductase OXR1, found in Pyricularia oryzae (strain 70-15 / ATCC MYA-4617 / FGSC 8958) (Rice blast fungus).